Consider the following 158-residue polypeptide: uncharacterized protein (158 aa).

An N-terminal signal peptide occupies residues 1–30 (MNKKFLKCGTLFLISCSILGSTIPAVTVFS).

This is an uncharacterized protein from Streptococcus pneumoniae serotype 2 (strain D39 / NCTC 7466).